The following is a 182-amino-acid chain: Ribosome-recycling factor (182 aa).

This sequence belongs to the RRF family.

Its subcellular location is the cytoplasm. Its function is as follows. Responsible for the release of ribosomes from messenger RNA at the termination of protein biosynthesis. May increase the efficiency of translation by recycling ribosomes from one round of translation to another. This chain is Ribosome-recycling factor, found in Prochlorococcus marinus (strain MIT 9215).